A 296-amino-acid polypeptide reads, in one-letter code: Nucleotide-binding protein SUB0630 (296 aa).

13 to 20 is a binding site for ATP; that stretch reads GMSGAGKT. Residue 63 to 66 participates in GTP binding; sequence DMRS.

Belongs to the RapZ-like family.

Displays ATPase and GTPase activities. The polypeptide is Nucleotide-binding protein SUB0630 (Streptococcus uberis (strain ATCC BAA-854 / 0140J)).